The sequence spans 373 residues: Dual-specificity RNA methyltransferase RlmN (373 aa).

Residue E104 is the Proton acceptor of the active site. The region spanning 110–349 (KNQRTTLCIS…VTIRKIRGYD (240 aa)) is the Radical SAM core domain. The cysteines at positions 117 and 354 are disulfide-linked. The [4Fe-4S] cluster site is built by C124, C128, and C131. Residues 178–179 (GE), S210, 232–234 (SLH), and N311 contribute to the S-adenosyl-L-methionine site. C354 functions as the S-methylcysteine intermediate in the catalytic mechanism.

It belongs to the radical SAM superfamily. RlmN family. [4Fe-4S] cluster is required as a cofactor.

It is found in the cytoplasm. It carries out the reaction adenosine(2503) in 23S rRNA + 2 reduced [2Fe-2S]-[ferredoxin] + 2 S-adenosyl-L-methionine = 2-methyladenosine(2503) in 23S rRNA + 5'-deoxyadenosine + L-methionine + 2 oxidized [2Fe-2S]-[ferredoxin] + S-adenosyl-L-homocysteine. The catalysed reaction is adenosine(37) in tRNA + 2 reduced [2Fe-2S]-[ferredoxin] + 2 S-adenosyl-L-methionine = 2-methyladenosine(37) in tRNA + 5'-deoxyadenosine + L-methionine + 2 oxidized [2Fe-2S]-[ferredoxin] + S-adenosyl-L-homocysteine. Functionally, specifically methylates position 2 of adenine 2503 in 23S rRNA and position 2 of adenine 37 in tRNAs. m2A2503 modification seems to play a crucial role in the proofreading step occurring at the peptidyl transferase center and thus would serve to optimize ribosomal fidelity. The sequence is that of Dual-specificity RNA methyltransferase RlmN from Buchnera aphidicola subsp. Baizongia pistaciae (strain Bp).